Reading from the N-terminus, the 533-residue chain is D-3-phosphoglycerate dehydrogenase (533 aa).

The residue at position 2 (A2) is an N-acetylalanine. A Phosphoserine modification is found at S14. Residue K21 is modified to N6-acetyllysine; alternate. K21 is covalently cross-linked (Glycyl lysine isopeptide (Lys-Gly) (interchain with G-Cter in SUMO1); alternate). K21 participates in a covalent cross-link: Glycyl lysine isopeptide (Lys-Gly) (interchain with G-Cter in SUMO2); alternate. Residue K58 is modified to N6-acetyllysine. Residues T78, 155–156 (RI), D175, T207, 234–236 (CAR), and D260 contribute to the NAD(+) site. T78 bears the Phosphothreonine mark. The active site involves R236. The active site involves E265. H283 serves as the catalytic Proton donor. Residue 283–286 (HLGA) coordinates NAD(+).

Belongs to the D-isomer specific 2-hydroxyacid dehydrogenase family. In terms of assembly, homotetramer.

The enzyme catalyses (2R)-3-phosphoglycerate + NAD(+) = 3-phosphooxypyruvate + NADH + H(+). The catalysed reaction is (R)-2-hydroxyglutarate + NAD(+) = 2-oxoglutarate + NADH + H(+). It catalyses the reaction (S)-malate + NAD(+) = oxaloacetate + NADH + H(+). It functions in the pathway amino-acid biosynthesis; L-serine biosynthesis; L-serine from 3-phospho-D-glycerate: step 1/3. Catalyzes the reversible oxidation of 3-phospho-D-glycerate to 3-phosphonooxypyruvate, the first step of the phosphorylated L-serine biosynthesis pathway. Also catalyzes the reversible oxidation of 2-hydroxyglutarate to 2-oxoglutarate and the reversible oxidation of (S)-malate to oxaloacetate. This is D-3-phosphoglycerate dehydrogenase (PHGDH) from Pongo abelii (Sumatran orangutan).